A 250-amino-acid polypeptide reads, in one-letter code: DNA repair protein RecO (250 aa).

Belongs to the RecO family.

Functionally, involved in DNA repair and RecF pathway recombination. The chain is DNA repair protein RecO from Staphylococcus aureus (strain bovine RF122 / ET3-1).